A 477-amino-acid chain; its full sequence is Trigger factor (477 aa).

In terms of domain architecture, PPIase FKBP-type spans E163 to V248. The segment covering K408–P461 has biased composition (basic and acidic residues). A disordered region spans residues K408 to K477.

Belongs to the FKBP-type PPIase family. Tig subfamily.

It is found in the cytoplasm. The catalysed reaction is [protein]-peptidylproline (omega=180) = [protein]-peptidylproline (omega=0). Involved in protein export. Acts as a chaperone by maintaining the newly synthesized protein in an open conformation. Functions as a peptidyl-prolyl cis-trans isomerase. This Pelagibacter ubique (strain HTCC1062) protein is Trigger factor.